Reading from the N-terminus, the 335-residue chain is Leukocyte cell-derived chemotaxin 1 (335 aa).

Residues 45–65 traverse the membrane as a helical segment; that stretch reads VVLISGAVLLLLGAIGAFYFW. Residues 104–201 form the BRICHOS domain; it reads GSGAEEAVEV…LCGDLPIFWL (98 aa). C131 and C193 form a disulfide bridge. The propeptide occupies 211–214; it reads RERR. Residues 221-269 form a disordered region; it reads VTTTTTRRLRSGPQGTPAPGRPNNGTRPSVQEDAEPFNPDNPYHQQEGE. T223 is a glycosylation site (N-linked (GlcNAc...) asparagine; in variant 223-N-E-224). T236 is a glycosylation site (O-linked (GalNAc...) threonine; partial). N244 carries an N-linked (GlcNAc...) asparagine glycan. Cystine bridges form between C283–C287, C284–C324, C294–C318, and C298–C314.

It belongs to the chondromodulin-1 family. In terms of processing, after cleavage, the post-translationally modified ChM-I is secreted as a glycoprotein. Two other smaller nonglycosylated chondromodulin forms (9 kDa and 7 kDa) are found either in developing articular cartilage or in chondrocytes. The 9 kDa form could be processed by an extracellular matrix-associated protease as a metalloproteinase and the 7 kDa form could be processed intracellularly. In terms of tissue distribution, nasal and articular cartilage, and fetal epiphysis.

The protein localises to the secreted. It localises to the extracellular space. It is found in the extracellular matrix. Its subcellular location is the endomembrane system. Its function is as follows. Bifunctional growth regulator that stimulates the growth of cultured chondrocytes in the presence of basic fibroblast growth factor (FGF) but inhibits the growth of cultured vascular endothelial cells. May contribute to the rapid growth of cartilage and vascular invasion prior to the replacement of cartilage by bone during endochondral bone development. Inhibits in vitro tube formation and mobilization of endothelial cells. Plays a role as antiangiogenic factor in cardiac valves to suppress neovascularization. The sequence is that of Leukocyte cell-derived chemotaxin 1 from Bos taurus (Bovine).